The sequence spans 258 residues: Glutamate racemase (258 aa).

Residues 12 to 13 and 44 to 45 contribute to the substrate site; these read DS and YG. The active-site Proton donor/acceptor is Cys-75. 76-77 contacts substrate; the sequence is NT. Cys-186 functions as the Proton donor/acceptor in the catalytic mechanism. Residue 187 to 188 participates in substrate binding; it reads TH.

It belongs to the aspartate/glutamate racemases family.

It carries out the reaction L-glutamate = D-glutamate. It participates in cell wall biogenesis; peptidoglycan biosynthesis. Provides the (R)-glutamate required for cell wall biosynthesis. The chain is Glutamate racemase from Clostridium botulinum (strain Alaska E43 / Type E3).